Consider the following 468-residue polypeptide: MQAAPSLRRASCLLLAAILDLARGYLTVNIEPLPPVVAGDAVTLKCNFKTDGRMREIVWYRVTDGGTIKQKIFTFDAMFSTNYSHMENYRKREDLVYQSTVRLPEVRISDNGPYECHVGIYDRATREKVVLASGNIFLNVMAPPTSIEVVAADSPAPFSRYQAQNFTLVCIVSGGKPAPMVYFKRDGEPIDAVPLTELPAASSGPVQDSRPFRSLLHRDVDDTKMQKSLSLLDTEYRAGRPYTERPARSLTQDPSLFVQPTTENIPETVVSREFPRWVHSAEPVYFLRHSRTPGSDGTVEVRALLTWTLNPQIDNEALFSCEVKHPALSMPMQAEVTLVAPKGPKIMMTPSRARVGDTVRILVHGFQNEVFPEPMFTWTRVGSRLLDGSAEFDGKELVLERVPAELNGSMYRCTAQNPLGSTDTHTRLIVFENPNIPRGTEDSRGSASGPAGVRLTLVLALTVILELT.

The signal sequence occupies residues 1–24 (MQAAPSLRRASCLLLAAILDLARG). In terms of domain architecture, Ig-like 1 spans 25–132 (YLTVNIEPLP…RATREKVVLA (108 aa)). Cysteines 46 and 116 form a disulfide. N-linked (GlcNAc...) asparagine glycosylation is found at asparagine 82, asparagine 165, and asparagine 407. The region spanning 344–429 (PKIMMTPSRA…GSTDTHTRLI (86 aa)) is the Ig-like 2 domain.

As to quaternary structure, interacts (Ig-like 1 domain) with NRXN2 (via Laminin G-like 1 domain) in a trans-interaction manner. Expressed in brain (at protein levels). Highly expressed in the pyramidal cell layer of the dorsal and ventral hippocampal CA1 and CA3 regions, layers 5 and 6 of the cortex, the thalamus and the pons and weakly expressed in the cerebellum. Expressed in neurons but not in glia.

It localises to the postsynaptic cell membrane. Involved in synaptic inhibition in the brain. Selectively regulates inhibitory presynaptic differentiation through interacting with presynaptic NRXN2. This chain is Immunoglobulin superfamily member 21 (Igsf21), found in Mus musculus (Mouse).